We begin with the raw amino-acid sequence, 636 residues long: MSPAAGAPGSGPGRRRLPALDVRRFSPVRKSRPVPPRAPGRALEVLVLLCSVAAAVAAVAQPLALGRTLDLLLRDGDAGWWLPLSAALLLGELLLDSATSLFTGRCNATWTASVRTRALRGLLRTAPEHARPYPPGDIGTRLTLNAADAGGAPAARAALAASLITPLGALVALALVDVWVALCVLTGLPALALLLRSFARDTGATVAAYQRTQSLIASRLLEALEGADTIGAAGTGERERARVLAPLAELAAQGRHMWALHGRALGRSGVLVPLLTLAATAVGGLRLAAGELSVGDLLAVGRYAQLTAGVGAAASLLGAIVRAREARRRTRELERMTATVYGTRRLPPNGPGELRLCGVRVLRGGREVLRADGVRVPGGSTVAVVGRSGAGKSVLAAVAGRLIDPDEGYVLLDGVRLDRLTHEALRTEVAYAFERPVLGEGTIAEAVADGARRSSRERVRQAARAAGADGFVRRLPHGYDTPLPRAPLSGGEHQRLGLARAFAHAGRLLVLDDATSSLDTATEHEVDLALRRSVRPGTRLVVAHRPSVADRADLVLWLEDGQVRAVGTHRELWHTAGYREVFGAGAGAGAGAGAGAGADAGAGADAGPGPDSGAATAVGGSGPGPVRRPEPEEARP.

Helical transmembrane passes span 45–65 (VLVL…PLAL), 78–98 (AGWW…LDSA), 175–195 (LVDV…ALLL), 269–289 (GVLV…RLAA), and 297–317 (LLAV…ASLL). One can recognise an ABC transmembrane type-1 domain in the interval 45–322 (VLVLLCSVAA…AASLLGAIVR (278 aa)). The 232-residue stretch at 354–585 (LRLCGVRVLR…AGYREVFGAG (232 aa)) folds into the ABC transporter domain. 386 to 393 (GRSGAGKS) serves as a coordination point for ATP. Gly residues predominate over residues 589 to 606 (GAGAGAGAGADAGAGADA). A disordered region spans residues 589-636 (GAGAGAGAGADAGAGADAGPGPDSGAATAVGGSGPGPVRRPEPEEARP). Over residues 607–618 (GPGPDSGAATAV) the composition is skewed to low complexity. A compositionally biased stretch (basic and acidic residues) spans 627-636 (RRPEPEEARP).

This sequence belongs to the ABC transporter superfamily.

Its subcellular location is the cell membrane. Functionally, probably involved in exporting SapB from the cell. Expression of the ram locus (ramA, ramB and ramR) induces rapid aerial mycelium formation in S.lividans. This Streptomyces coelicolor (strain ATCC BAA-471 / A3(2) / M145) protein is ABC transporter ATP-binding protein RamA.